Here is a 131-residue protein sequence, read N- to C-terminus: Profilin (131 aa).

It belongs to the profilin family. In terms of assembly, occurs in many kinds of cells as a complex with monomeric actin in a 1:1 ratio.

Its subcellular location is the cytoplasm. The protein resides in the cytoskeleton. In terms of biological role, binds to actin and affects the structure of the cytoskeleton. At high concentrations, profilin prevents the polymerization of actin, whereas it enhances it at low concentrations. Has a high affinity for poly-proline. This is Profilin from Citrullus lanatus (Watermelon).